The sequence spans 290 residues: uncharacterized protein (290 aa).

The active-site Schiff-base intermediate with substrate is K203.

It belongs to the DeoC/FbaB aldolase family.

This is an uncharacterized protein from Pasteurella multocida (strain Pm70).